We begin with the raw amino-acid sequence, 438 residues long: UPF0229 protein NGR_c12350 (438 aa).

Over residues 1–16 (MPNFIDRRLNPKDKSL) the composition is skewed to basic and acidic residues. 2 disordered regions span residues 1 to 20 (MPNFIDRRLNPKDKSLGNRQ) and 83 to 107 (FAAGDRLPKRSSGGGATGAGAGTGQ). Residues 94–105 (SGGGATGAGAGT) show a composition bias toward gly residues.

The protein belongs to the UPF0229 family.

This Sinorhizobium fredii (strain NBRC 101917 / NGR234) protein is UPF0229 protein NGR_c12350.